A 350-amino-acid polypeptide reads, in one-letter code: Thioredoxin-like fold domain-containing protein MRL7L, chloroplastic (350 aa).

The transit peptide at 1–48 (MILPFSTQFTCPVQDNGFSPSSLLSHCKRDRFEVTSLRYDSFGSVKTA) directs the protein to the chloroplast. Disordered stretches follow at residues 78 to 107 (KKEEDSDSEDEEDEVKEETFGGKEASLDDP) and 182 to 201 (NEKKEEEDDDEDSEGDDSEK). Acidic residues-rich tracts occupy residues 82 to 93 (DSDSEDEEDEVK) and 186 to 200 (EEEDDDEDSEGDDSE).

The protein resides in the plastid. Its subcellular location is the chloroplast stroma. It is found in the nucleus. Functionally, plays an essential role in early steps of chloroplast development. Involved in the regulation of plastid gene expression. Required for the proper function of the plastid transcriptional machinery and protein accumulation in thylakoid membranes. May function as molecular chaperone to ensure proper organization of the nucleoids in chloroplasts. Is a necessary component of phytochrome signaling for photosynthesis-associated plastid-encoded genes (PhAPGs) activation. Mediates the degradation of two repressors of chloroplast biogenesis, PIF1 and PIF3 in nucleus. Promotes the assembly of the plastid-encoded RNA polymerase (PEP) complex for PhAPG transcription in plastids. In Arabidopsis thaliana (Mouse-ear cress), this protein is Thioredoxin-like fold domain-containing protein MRL7L, chloroplastic.